The primary structure comprises 547 residues: Glucose-6-phosphate isomerase 2 (547 aa).

The active-site Proton donor is E351. Active-site residues include H382 and K508.

This sequence belongs to the GPI family.

It is found in the cytoplasm. The catalysed reaction is alpha-D-glucose 6-phosphate = beta-D-fructose 6-phosphate. Its pathway is carbohydrate biosynthesis; gluconeogenesis. It participates in carbohydrate degradation; glycolysis; D-glyceraldehyde 3-phosphate and glycerone phosphate from D-glucose: step 2/4. Catalyzes the reversible isomerization of glucose-6-phosphate to fructose-6-phosphate. The chain is Glucose-6-phosphate isomerase 2 from Neisseria meningitidis serogroup B (strain ATCC BAA-335 / MC58).